Consider the following 159-residue polypeptide: Abscisic acid and environmental stress-inducible protein (159 aa).

6 repeat units span residues 38-49 (GGGYNHGGGGYN), 50-61 (GGGYNHGGGGYN), 63-74 (GGGYNHGGGGYN), 77-88 (GGGYNHGGGGYN), 91-102 (GGGYNHGGGGYN), and 105-116 (GGGYNHGGGGYN). The 7 X 12 AA repeats of G-G-G-Y-N-H-G-G-G-Y-N stretch occupies residues 38 to 135 (GGGYNHGGGG…GYNHGGGGCQ (98 aa)). The 7; approximate repeat unit spans residues 124-135 (GGGYNHGGGGCQ).

This sequence belongs to the GRP family.

This Medicago sativa subsp. falcata (Sickle medic) protein is Abscisic acid and environmental stress-inducible protein.